The primary structure comprises 368 residues: Probable protein phosphatase 2C 58 (368 aa).

The PPM-type phosphatase domain maps to 23–329; sequence KFGLSSMQGW…DNMTMILVQF (307 aa). Positions 57, 58, 272, and 320 each coordinate Mn(2+). A disordered region spans residues 336–368; the sequence is NKNVSPAEQSAADKQPTGDTHWSEIHVTEESSS. The span at 356-368 shows a compositional bias: basic and acidic residues; it reads HWSEIHVTEESSS.

This sequence belongs to the PP2C family. Mg(2+) is required as a cofactor. Requires Mn(2+) as cofactor.

It carries out the reaction O-phospho-L-seryl-[protein] + H2O = L-seryl-[protein] + phosphate. The enzyme catalyses O-phospho-L-threonyl-[protein] + H2O = L-threonyl-[protein] + phosphate. The polypeptide is Probable protein phosphatase 2C 58 (Oryza sativa subsp. japonica (Rice)).